A 312-amino-acid chain; its full sequence is Prephenate dehydratase (312 aa).

The region spanning 3–194 (GIAYLGPEGT…ARTRFVLVGR (192 aa)) is the Prephenate dehydratase domain. The ACT domain maps to 208–285 (SVVLQLDNVP…ADVRYLGSWP (78 aa)). Residues 291-312 (GAAPPPMDESASWLEGLREGRP) are disordered.

In terms of assembly, homodimer.

The enzyme catalyses prephenate + H(+) = 3-phenylpyruvate + CO2 + H2O. The protein operates within amino-acid biosynthesis; L-phenylalanine biosynthesis; phenylpyruvate from prephenate: step 1/1. The polypeptide is Prephenate dehydratase (pheA) (Mycolicibacterium vanbaalenii (strain DSM 7251 / JCM 13017 / BCRC 16820 / KCTC 9966 / NRRL B-24157 / PYR-1) (Mycobacterium vanbaalenii)).